We begin with the raw amino-acid sequence, 35 residues long: Photosystem II reaction center protein T (35 aa).

Residues 3–23 form a helical membrane-spanning segment; it reads ALVYTFLLVGTLGIIFFAIFF.

The protein belongs to the PsbT family. As to quaternary structure, PSII is composed of 1 copy each of membrane proteins PsbA, PsbB, PsbC, PsbD, PsbE, PsbF, PsbH, PsbI, PsbJ, PsbK, PsbL, PsbM, PsbT, PsbY, PsbZ, Psb30/Ycf12, at least 3 peripheral proteins of the oxygen-evolving complex and a large number of cofactors. It forms dimeric complexes.

The protein resides in the plastid. It is found in the chloroplast thylakoid membrane. Functionally, found at the monomer-monomer interface of the photosystem II (PS II) dimer, plays a role in assembly and dimerization of PSII. PSII is a light-driven water plastoquinone oxidoreductase, using light energy to abstract electrons from H(2)O, generating a proton gradient subsequently used for ATP formation. This is Photosystem II reaction center protein T from Staurastrum punctulatum (Green alga).